The sequence spans 92 residues: Small ribosomal subunit protein uS19 (92 aa).

This sequence belongs to the universal ribosomal protein uS19 family.

In terms of biological role, protein S19 forms a complex with S13 that binds strongly to the 16S ribosomal RNA. This is Small ribosomal subunit protein uS19 from Bifidobacterium animalis subsp. lactis (strain AD011).